A 194-amino-acid chain; its full sequence is HTH-type transcriptional regulator BetI (194 aa).

In terms of domain architecture, HTH tetR-type spans 8-68 (EIRRAQLIDA…ATMRHVLRDL (61 aa)). The segment at residues 31-50 (TLASVAQRANISTGIVSHYF) is a DNA-binding region (H-T-H motif).

The protein operates within amine and polyamine biosynthesis; betaine biosynthesis via choline pathway [regulation]. Repressor involved in the biosynthesis of the osmoprotectant glycine betaine. It represses transcription of the choline transporter BetT and the genes of BetAB involved in the synthesis of glycine betaine. In Burkholderia ambifaria (strain MC40-6), this protein is HTH-type transcriptional regulator BetI.